The primary structure comprises 143 residues: 3-dehydroquinate dehydratase (143 aa).

The Proton acceptor role is filled by Tyr-21. The substrate site is built by Asn-73, His-79, and Asp-86. His-99 serves as the catalytic Proton donor. Substrate is bound by residues 100 to 101 (IS) and Arg-110.

It belongs to the type-II 3-dehydroquinase family. In terms of assembly, homododecamer.

The catalysed reaction is 3-dehydroquinate = 3-dehydroshikimate + H2O. The protein operates within metabolic intermediate biosynthesis; chorismate biosynthesis; chorismate from D-erythrose 4-phosphate and phosphoenolpyruvate: step 3/7. Its function is as follows. Catalyzes a trans-dehydration via an enolate intermediate. The chain is 3-dehydroquinate dehydratase from Deinococcus radiodurans (strain ATCC 13939 / DSM 20539 / JCM 16871 / CCUG 27074 / LMG 4051 / NBRC 15346 / NCIMB 9279 / VKM B-1422 / R1).